Here is a 492-residue protein sequence, read N- to C-terminus: Propanoyl-CoA:succinate CoA transferase (492 aa).

Residue 260–264 participates in CoA binding; the sequence is GVGNI. The active-site 5-glutamyl coenzyme A thioester intermediate is E286. N376 and G380 together coordinate CoA.

It belongs to the acetyl-CoA hydrolase/transferase family.

The enzyme catalyses propanoyl-CoA + succinate = propanoate + succinyl-CoA. Catalyzes the transfer of coenzyme A from propionyl-CoA to succinate. Could be part of a pathway that converts succinate to propionate. The protein is Propanoyl-CoA:succinate CoA transferase of Escherichia coli (strain K12).